A 257-amino-acid chain; its full sequence is Deoxyribose-phosphate aldolase (257 aa).

Aspartate 102 (proton donor/acceptor) is an active-site residue. The active-site Schiff-base intermediate with acetaldehyde is lysine 166. Lysine 198 functions as the Proton donor/acceptor in the catalytic mechanism.

Belongs to the DeoC/FbaB aldolase family. DeoC type 2 subfamily.

It localises to the cytoplasm. It catalyses the reaction 2-deoxy-D-ribose 5-phosphate = D-glyceraldehyde 3-phosphate + acetaldehyde. The protein operates within carbohydrate degradation; 2-deoxy-D-ribose 1-phosphate degradation; D-glyceraldehyde 3-phosphate and acetaldehyde from 2-deoxy-alpha-D-ribose 1-phosphate: step 2/2. Functionally, catalyzes a reversible aldol reaction between acetaldehyde and D-glyceraldehyde 3-phosphate to generate 2-deoxy-D-ribose 5-phosphate. In Shewanella amazonensis (strain ATCC BAA-1098 / SB2B), this protein is Deoxyribose-phosphate aldolase.